The primary structure comprises 598 residues: Elongation factor 4 (598 aa).

Residues 5 to 187 form the tr-type G domain; it reads SHIRNFSIIA…RLVATIPAPI (183 aa). Residues 17–22 and 134–137 contribute to the GTP site; these read DHGKST and NKID.

Belongs to the TRAFAC class translation factor GTPase superfamily. Classic translation factor GTPase family. LepA subfamily.

Its subcellular location is the cell inner membrane. The catalysed reaction is GTP + H2O = GDP + phosphate + H(+). Required for accurate and efficient protein synthesis under certain stress conditions. May act as a fidelity factor of the translation reaction, by catalyzing a one-codon backward translocation of tRNAs on improperly translocated ribosomes. Back-translocation proceeds from a post-translocation (POST) complex to a pre-translocation (PRE) complex, thus giving elongation factor G a second chance to translocate the tRNAs correctly. Binds to ribosomes in a GTP-dependent manner. This is Elongation factor 4 from Pseudomonas fluorescens (strain Pf0-1).